Here is a 505-residue protein sequence, read N- to C-terminus: 2,3-bisphosphoglycerate-independent phosphoglycerate mutase (505 aa).

The Mn(2+) site is built by aspartate 11 and serine 61. Serine 61 acts as the Phosphoserine intermediate in catalysis. Substrate-binding positions include histidine 122, 152-153, arginine 183, arginine 189, 259-262, and lysine 332; these read RD and RTDR. Aspartate 399, histidine 403, aspartate 440, histidine 441, and histidine 458 together coordinate Mn(2+).

It belongs to the BPG-independent phosphoglycerate mutase family. Monomer. Mn(2+) is required as a cofactor.

The enzyme catalyses (2R)-2-phosphoglycerate = (2R)-3-phosphoglycerate. It functions in the pathway carbohydrate degradation; glycolysis; pyruvate from D-glyceraldehyde 3-phosphate: step 3/5. Its function is as follows. Catalyzes the interconversion of 2-phosphoglycerate and 3-phosphoglycerate. This chain is 2,3-bisphosphoglycerate-independent phosphoglycerate mutase, found in Flavobacterium psychrophilum (strain ATCC 49511 / DSM 21280 / CIP 103535 / JIP02/86).